The primary structure comprises 468 residues: Glutamate--tRNA ligase (468 aa).

Residues 10–20 (PSPTGYLHIGG) carry the 'HIGH' region motif. Positions 252 to 256 (KLSKR) match the 'KMSKS' region motif. K255 contributes to the ATP binding site.

Belongs to the class-I aminoacyl-tRNA synthetase family. Glutamate--tRNA ligase type 1 subfamily. In terms of assembly, monomer.

It is found in the cytoplasm. The enzyme catalyses tRNA(Glu) + L-glutamate + ATP = L-glutamyl-tRNA(Glu) + AMP + diphosphate. Catalyzes the attachment of glutamate to tRNA(Glu) in a two-step reaction: glutamate is first activated by ATP to form Glu-AMP and then transferred to the acceptor end of tRNA(Glu). In Mycoplasmopsis pulmonis (strain UAB CTIP) (Mycoplasma pulmonis), this protein is Glutamate--tRNA ligase.